An 81-amino-acid chain; its full sequence is RNA-binding protein Hfq (81 aa).

One can recognise a Sm domain in the interval 10–69 (DPFLNTLRREHVPVSIYLVNGIKLQGQIESFDQYVVLLRNTVTQMVYKHAISTIVPGRAV).

The protein belongs to the Hfq family. As to quaternary structure, homohexamer.

Functionally, RNA chaperone that binds small regulatory RNA (sRNAs) and mRNAs to facilitate mRNA translational regulation in response to envelope stress, environmental stress and changes in metabolite concentrations. Also binds with high specificity to tRNAs. The polypeptide is RNA-binding protein Hfq (Variovorax paradoxus (strain S110)).